The sequence spans 498 residues: Calcium-binding tyrosine phosphorylation-regulated protein (498 aa).

Residues 12 to 49 (YGLKTLLEGVSRAILKINPPNITQFAAVYFKELIVFRE) enclose the RIIa domain. Disordered regions lie at residues 74–107 (GTTQ…TDTE), 135–164 (EETP…SPAA), and 247–279 (VDLG…AYDQ). Residues 145 to 164 (SPKPSTPKAVTPPSSPSPAA) are compositionally biased toward low complexity.

As to quaternary structure, interacts with FSCB. Post-translationally, phosphorylated on tyrosine residues during in vitro capacitation. Dephosphorylation affects its ability to bind calcium. In terms of tissue distribution, expressed in testis.

It is found in the cytoplasm. It localises to the cytoskeleton. The protein localises to the cell projection. The protein resides in the cilium. Its subcellular location is the flagellum. In terms of biological role, may function as a regulator of both motility- and head-associated functions such as capacitation and the acrosome reaction. Binds calcium in vitro. The sequence is that of Calcium-binding tyrosine phosphorylation-regulated protein (CABYR) from Vulpes vulpes (Red fox).